Here is a 72-residue protein sequence, read N- to C-terminus: Conotoxin Gla(2)-TxVI/B (72 aa).

Residues 1–19 (MEKLIILLLVAAVLMSTQA) form the signal peptide. A propeptide spanning residues 20–44 (LFQEKRTMKKIDFLSKGKADAEKQR) is cleaved from the precursor. 3 disulfides stabilise this stretch: Cys-48–Cys-62, Cys-55–Cys-66, and Cys-61–Cys-70. Glu-56 carries the 4-carboxyglutamate modification. Pro-58 carries the 4-hydroxyproline modification. Ser-71 carries the serine amide modification.

In terms of processing, brominated at one of the Trp residues. As to expression, expressed by the venom duct.

It is found in the secreted. The sequence is that of Conotoxin Gla(2)-TxVI/B from Conus textile (Cloth-of-gold cone).